The primary structure comprises 417 residues: Histidine--tRNA ligase (417 aa).

Belongs to the class-II aminoacyl-tRNA synthetase family. Homodimer.

The protein localises to the cytoplasm. It carries out the reaction tRNA(His) + L-histidine + ATP = L-histidyl-tRNA(His) + AMP + diphosphate + H(+). This chain is Histidine--tRNA ligase, found in Oleidesulfovibrio alaskensis (strain ATCC BAA-1058 / DSM 17464 / G20) (Desulfovibrio alaskensis).